A 359-amino-acid polypeptide reads, in one-letter code: Lipopolysaccharide 1,6-galactosyltransferase (359 aa).

UDP contacts are provided by glutamine 244 and glutamate 276.

This sequence belongs to the glycosyltransferase group 1 family. Glycosyltransferase 4 subfamily.

It catalyses the reaction alpha-D-Glc-(1-&gt;3)-[L-alpha-D-Hep-(1-&gt;7)]-4-O-PO3(2-)-L-alpha-D-Hep-(1-&gt;3)-4-O-PO3(2-)-L-alpha-D-Hep-(1-&gt;5)-[alpha-Kdo-(2-&gt;4)]-alpha-Kdo-(2-&gt;6)-lipid A + UDP-alpha-D-galactose = alpha-D-Gal-(1-&gt;6)-alpha-D-Glc-(1-&gt;3)-[L-alpha-D-Hep-(1-&gt;7)]-4-O-PO3(2-)-L-alpha-D-Hep-(1-&gt;3)-4-O-PO3(2-)-L-alpha-D-Hep-(1-&gt;5)-[alpha-Kdo-(2-&gt;4)]-alpha-Kdo-(2-&gt;6)-lipid A + UDP + H(+). It functions in the pathway bacterial outer membrane biogenesis; LPS core biosynthesis. Galactosyltransferase involved in the biosynthesis of the core oligosaccharide region of lipopolysaccharide (LPS). Catalyzes the addition of galactose from UDP-galactose to the first glucose residue of the LPS outer core. In Salmonella typhimurium (strain LT2 / SGSC1412 / ATCC 700720), this protein is Lipopolysaccharide 1,6-galactosyltransferase.